The following is a 103-amino-acid chain: MLVTTTERISGQEYEIIGEVFGLTTRSKNMFKDLGAGLKSVVGGEIKGYTDMQREARDQAIERLKAEASKLGADAVVMMRFDSGTIGTDMQSVVAYGTAVKYI.

It belongs to the UPF0145 family.

The protein is UPF0145 protein EF_0241 of Enterococcus faecalis (strain ATCC 700802 / V583).